A 166-amino-acid chain; its full sequence is NAD(P)H-quinone oxidoreductase subunit I, chloroplastic (166 aa).

4Fe-4S ferredoxin-type domains are found at residues 55–84 (GRIH…VDWK) and 95–124 (LNYS…MTEE). 8 residues coordinate [4Fe-4S] cluster: C64, C67, C70, C74, C104, C107, C110, and C114.

This sequence belongs to the complex I 23 kDa subunit family. As to quaternary structure, NDH is composed of at least 16 different subunits, 5 of which are encoded in the nucleus. The cofactor is [4Fe-4S] cluster.

The protein localises to the plastid. The protein resides in the chloroplast thylakoid membrane. It catalyses the reaction a plastoquinone + NADH + (n+1) H(+)(in) = a plastoquinol + NAD(+) + n H(+)(out). The enzyme catalyses a plastoquinone + NADPH + (n+1) H(+)(in) = a plastoquinol + NADP(+) + n H(+)(out). Its function is as follows. NDH shuttles electrons from NAD(P)H:plastoquinone, via FMN and iron-sulfur (Fe-S) centers, to quinones in the photosynthetic chain and possibly in a chloroplast respiratory chain. The immediate electron acceptor for the enzyme in this species is believed to be plastoquinone. Couples the redox reaction to proton translocation, and thus conserves the redox energy in a proton gradient. The protein is NAD(P)H-quinone oxidoreductase subunit I, chloroplastic of Hofmeisteria fasciculata (Helogyne fasciculata).